Consider the following 129-residue polypeptide: Snaclec coagulation factor IX-binding protein subunit A (129 aa).

The C-type lectin domain occupies 1 to 129 (DCPSGWSSYE…GQQNPFVCEA (129 aa)). 3 disulfide bridges follow: cysteine 2-cysteine 13, cysteine 30-cysteine 127, and cysteine 102-cysteine 119. Ca(2+) contacts are provided by serine 41, glutamate 43, and glutamate 47. Residue glutamate 128 coordinates Ca(2+).

Belongs to the snaclec family. As to quaternary structure, heterodimer of subunits A and B; disulfide-linked. As to expression, expressed by the venom gland.

The protein resides in the secreted. In terms of biological role, anticoagulant protein which binds to the gamma-carboxyglutamic acid-domain regions of factor IX (F9) (but not factor X) in the presence of calcium with a 1 to 1 stoichiometry. This chain is Snaclec coagulation factor IX-binding protein subunit A, found in Protobothrops flavoviridis (Habu).